The sequence spans 757 residues: Lysyl oxidase homolog 4 (757 aa).

Residues 1–25 form the signal peptide; that stretch reads MWFLPAALPLLPLLLLLGQAPPSRP. SRCR domains are found at residues 33-134, 160-288, 312-412, and 422-530; these read LRLV…VVCN, VRLK…VSCV, VRLR…VRCN, and VRLA…VSCT. Disulfide bonds link cysteine 59–cysteine 123, cysteine 72–cysteine 133, cysteine 103–cysteine 113, cysteine 192–cysteine 277, cysteine 205–cysteine 287, cysteine 252–cysteine 262, cysteine 337–cysteine 401, cysteine 350–cysteine 411, cysteine 381–cysteine 391, cysteine 451–cysteine 516, cysteine 464–cysteine 529, cysteine 498–cysteine 508, cysteine 559–cysteine 565, cysteine 611–cysteine 659, cysteine 643–cysteine 649, cysteine 671–cysteine 681, and cysteine 718–cysteine 732. A glycan (N-linked (GlcNAc...) asparagine) is linked at asparagine 199. Positions 534 to 737 are lysyl-oxidase like; sequence PDLVMNAQLV…WLHNCHTGDS (204 aa). Cu cation-binding residues include histidine 612, histidine 614, and histidine 616. Residue asparagine 630 is glycosylated (N-linked (GlcNAc...) asparagine). Residues 639 to 675 constitute a cross-link (lysine tyrosylquinone (Lys-Tyr)); sequence KASFCLEDTNCPTGMQRRYACANFGEQGVTVGCWDTY. A 2',4',5'-topaquinone modification is found at tyrosine 675.

It belongs to the lysyl oxidase family. The cofactor is Cu cation. It depends on lysine tyrosylquinone residue as a cofactor. Post-translationally, the lysine tyrosylquinone cross-link (LTQ) is generated by condensation of the epsilon-amino group of a lysine with a topaquinone produced by oxidation of tyrosine. May be proteolytically cleaved by BMP1.

It localises to the secreted. It is found in the extracellular space. The enzyme catalyses L-lysyl-[protein] + O2 + H2O = (S)-2-amino-6-oxohexanoyl-[protein] + H2O2 + NH4(+). In terms of biological role, catalyzes the oxidative deamination of lysine and hydroxylysine residues in collagen and elastin, resulting in the formation of covalent cross-linkages, and the stabilization of collagen and elastin fibers. In Bos taurus (Bovine), this protein is Lysyl oxidase homolog 4 (LOXL4).